Here is a 197-residue protein sequence, read N- to C-terminus: Transposon Tn10 TetC protein (197 aa).

The HTH tetR-type domain occupies 12 to 72 (KSTYQSLVNS…ACYKQQLIMI (61 aa)). Positions 35 to 54 (SIDEISGKALVTKGAFYHHF) form a DNA-binding region, H-T-H motif.

The protein is Transposon Tn10 TetC protein (tetC) of Escherichia coli.